The following is a 530-amino-acid chain: Pentatricopeptide repeat-containing protein At3g51320 (530 aa).

PPR repeat units lie at residues 82–116 (KLYCANPVFKAYLVSSSPKQALGFYFDILRFGFVP), 117–151 (DSYTFVSLISCIEKTCCVDSGKMCHGQAIKHGCDQ), 152–182 (VLPVQNSLMHMYTCCGALDLAKKLFVEIPKR), 183–217 (DIVSWNSIIAGMVRNGDVLAAHKLFDEMPDKNIIS), 218–248 (WNIMISAYLGANNPGVSISLFREMVRAGFQG), 249–283 (NESTLVLLLNACGRSARLKEGRSVHASLIRTFLNS), 284–314 (SVVIDTALIDMYGKCKEVGLARRIFDSLSIR), 315–349 (NKVTWNVMILAHCLHGRPEGGLELFEAMINGMLRP), 350–380 (DEVTFVGVLCGCARAGLVSQGQSYYSLMVDE), and 386–420 (NFGHQWCMANLYSSAGFPEEAEEALKNLPDEDVTP). Positions 424–499 (KWANLLSSSR…IPGCGLVDLK (76 aa)) are type E motif.

Belongs to the PPR family. PCMP-E subfamily.

This chain is Pentatricopeptide repeat-containing protein At3g51320, found in Arabidopsis thaliana (Mouse-ear cress).